The sequence spans 188 residues: MANNTTSLGSPWPENFWEDLIMSFTVSVAIGLAIGGFLWALFVFLSRRRRASAPISQWSPTRRPRSSYNHGLNRTGFYRHSGYERRSNLSLASLTFQRQASMELVNSFPRKSSFRASTFHPFLQCPPLPVETESQLMTLSASTTPSTLSTAHSPSRPDFRWSSNSLRMGLSTPPPPAYESIIKAFPDS.

The helical transmembrane segment at F24–F44 threads the bilayer. A Bipartite nuclear localization signal motif is present at residues R47–R65. A phosphoserine mark is found at S87, S90, S93, and S101.

It belongs to the MYCT1 family. As to expression, highly expressed in lung, heart, and skeletal muscle. Expressed in brain, eye, liver, kidney, smooth muscle, pancreas, thyroid, thymus, submaxillary gland, spleen, testis, ovary, prostate, epididymis, and uterus. Deregulated expression promotes apoptosis in response to growth factor deprivation. Overexpression in synergy with CCNB1 may promote genomic instability.

The protein localises to the nucleus membrane. Its function is as follows. May regulate certain MYC target genes, MYC seems to be a direct upstream transcriptional activator. Does not seem to significantly affect growth cell capacity. Overexpression seems to mediate many of the known phenotypic features associated with MYC, including promotion of apoptosis, alteration of morphology, enhancement of anchorage-independent growth, tumorigenic conversion, promotion of genomic instability and inhibition of hematopoietic differentiation. The protein is Myc target protein 1 (Myct1) of Mus musculus (Mouse).